The sequence spans 535 residues: CTP synthase (535 aa).

Residues 1-267 (MTKYIFVTGG…DQIVCDHLKL (267 aa)) form an amidoligase domain region. Ser-13 is a binding site for CTP. Position 13 (Ser-13) interacts with UTP. ATP is bound at residue 14–19 (SLGKGI). Tyr-54 serves as a coordination point for L-glutamine. Asp-71 contacts ATP. The Mg(2+) site is built by Asp-71 and Glu-141. CTP contacts are provided by residues 148-150 (DIE), 188-193 (KTKPTQ), and Lys-224. UTP contacts are provided by residues 188 to 193 (KTKPTQ) and Lys-224. 240–242 (RDA) contributes to the ATP binding site. The Glutamine amidotransferase type-1 domain occupies 292 to 534 (KIALVGKYVE…VRASITNKES (243 aa)). Residue Gly-354 participates in L-glutamine binding. Residue Cys-381 is the Nucleophile; for glutamine hydrolysis of the active site. L-glutamine-binding positions include 382-385 (LGMQ), Glu-405, and Arg-462. Catalysis depends on residues His-507 and Glu-509.

Belongs to the CTP synthase family. Homotetramer.

The catalysed reaction is UTP + L-glutamine + ATP + H2O = CTP + L-glutamate + ADP + phosphate + 2 H(+). It carries out the reaction L-glutamine + H2O = L-glutamate + NH4(+). It catalyses the reaction UTP + NH4(+) + ATP = CTP + ADP + phosphate + 2 H(+). The protein operates within pyrimidine metabolism; CTP biosynthesis via de novo pathway; CTP from UDP: step 2/2. Its activity is regulated as follows. Allosterically activated by GTP, when glutamine is the substrate; GTP has no effect on the reaction when ammonia is the substrate. The allosteric effector GTP functions by stabilizing the protein conformation that binds the tetrahedral intermediate(s) formed during glutamine hydrolysis. Inhibited by the product CTP, via allosteric rather than competitive inhibition. Catalyzes the ATP-dependent amination of UTP to CTP with either L-glutamine or ammonia as the source of nitrogen. Regulates intracellular CTP levels through interactions with the four ribonucleotide triphosphates. The protein is CTP synthase of Bacillus cereus (strain G9842).